The chain runs to 58 residues: uncharacterized protein (58 aa).

This is an uncharacterized protein from Bacillus subtilis (strain 168).